We begin with the raw amino-acid sequence, 118 residues long: Inner membrane protein YhaI (118 aa).

At 1 to 25 (MQWYLSVLKNYVGFSGRARRKEYWM) the chain is on the periplasmic side. Residues 26–46 (FTLINAIVGAIINVIQLILGL) traverse the membrane as a helical segment. Residue glutamate 47 is a topological domain, cytoplasmic. The chain crosses the membrane as a helical span at residues 48 to 68 (LPYLSMLYLLATFLPVLALAI). The Periplasmic segment spans residues 69–77 (RRLHDTDRS). The chain crosses the membrane as a helical span at residues 78–98 (GAWALLFFVPFIGWLVLLVFF). The Cytoplasmic portion of the chain corresponds to 99-118 (CTEGTSGSNRYGNDPKFGSN).

This sequence to E.coli YhaH.

The protein resides in the cell inner membrane. The protein is Inner membrane protein YhaI (yhaI) of Escherichia coli O157:H7.